The chain runs to 240 residues: Eukaryotic translation initiation factor 4E-3 (240 aa).

The interval 1 to 51 (MVVTDSPVSGIMADQNIDPNTTTSPSPKEKHVSAIKAISGDEKAPSKEKKN) is disordered. Residues 17-26 (IDPNTTTSPS) show a composition bias toward polar residues. The segment covering 39 to 51 (SGDEKAPSKEKKN) has biased composition (basic and acidic residues). EIF4G-binding stretches follow at residues 65 to 68 (HCFQ) and 75 to 111 (FDNP…NNIH). Residues 83-88 (NQVIWG), Lys115, and 133-134 (WE) contribute to the mRNA site. Cys138 and Cys176 are joined by a disulfide. The tract at residues 159–168 (NTLLALVGEQ) is EIF4G-binding. MRNA contacts are provided by residues 183–188 (RARGDR) and 228–232 (KTLDR).

It belongs to the eukaryotic initiation factor 4E family. In terms of assembly, EIF4F is a multi-subunit complex, the composition of which varies with external and internal environmental conditions. It is composed of at least EIF4A, EIF4E and EIF4G. EIF4E is also known to interact with other partners. In higher plants two isoforms of EIF4F have been identified, named isoform EIF4F and isoform EIF(iso)4F. Isoform EIF4F has subunits p220 and p26, whereas isoform EIF(iso)4F has subunits p82 and p28. Post-translationally, according to the redox status, the Cys-138-Cys-176 disulfide bridge may have a role in regulating protein function by affecting its ability to bind capped mRNA.

It localises to the nucleus. Its subcellular location is the cytoplasm. In terms of biological role, component of the protein complex eIF4F, which is involved in the recognition of the mRNA cap, ATP-dependent unwinding of 5'-terminal secondary structure and recruitment of mRNA to the ribosome. Recognizes and binds the 7-methylguanosine-containing mRNA cap during an early step in the initiation of protein synthesis and facilitates ribosome binding by inducing the unwinding of the mRNAs secondary structures. The polypeptide is Eukaryotic translation initiation factor 4E-3 (Arabidopsis thaliana (Mouse-ear cress)).